We begin with the raw amino-acid sequence, 426 residues long: Isocitrate dehydrogenase [NADP] (426 aa).

Positions 123, 125, 129, 139, and 162 each coordinate D-threo-isocitrate. A Mg(2+)-binding site is contributed by Asp312. NADP(+)-binding positions include 344 to 350 (HGTAWDI), Asn357, and Lys404.

Belongs to the isocitrate and isopropylmalate dehydrogenases family. Homodimer. It depends on Mg(2+) as a cofactor. Mn(2+) serves as cofactor.

The catalysed reaction is D-threo-isocitrate + NADP(+) = 2-oxoglutarate + CO2 + NADPH. In terms of biological role, catalyzes the oxidative decarboxylation of isocitrate to 2-oxoglutarate and carbon dioxide with the concomitant reduction of NADP(+). In Aquifex aeolicus (strain VF5), this protein is Isocitrate dehydrogenase [NADP] (icd).